Reading from the N-terminus, the 396-residue chain is tRNA(Met) cytidine acetate ligase (396 aa).

ATP is bound by residues 9 to 22 (IVEY…HLHH), Gly-103, Asn-154, and Arg-179.

The protein belongs to the TmcAL family.

It localises to the cytoplasm. It catalyses the reaction cytidine(34) in elongator tRNA(Met) + acetate + ATP = N(4)-acetylcytidine(34) in elongator tRNA(Met) + AMP + diphosphate. Functionally, catalyzes the formation of N(4)-acetylcytidine (ac(4)C) at the wobble position of elongator tRNA(Met), using acetate and ATP as substrates. First activates an acetate ion to form acetyladenylate (Ac-AMP) and then transfers the acetyl group to tRNA to form ac(4)C34. The chain is tRNA(Met) cytidine acetate ligase from Fusobacterium nucleatum subsp. nucleatum (strain ATCC 25586 / DSM 15643 / BCRC 10681 / CIP 101130 / JCM 8532 / KCTC 2640 / LMG 13131 / VPI 4355).